A 131-amino-acid chain; its full sequence is Small ribosomal subunit protein uS11 (131 aa).

It belongs to the universal ribosomal protein uS11 family. In terms of assembly, part of the 30S ribosomal subunit. Interacts with proteins S7 and S18. Binds to IF-3.

Functionally, located on the platform of the 30S subunit, it bridges several disparate RNA helices of the 16S rRNA. Forms part of the Shine-Dalgarno cleft in the 70S ribosome. The polypeptide is Small ribosomal subunit protein uS11 (Wigglesworthia glossinidia brevipalpis).